A 515-amino-acid chain; its full sequence is Na(+)/H(+) antiporter NhaB (515 aa).

The next 11 membrane-spanning stretches (helical) occupy residues 23 to 43 (LAII…NPFV), 45 to 65 (GWLL…CYPL), 96 to 116 (VVLL…LLLF), 136 to 156 (CLAS…AVVI), 204 to 224 (LMMH…VGEP), 245 to 265 (APIT…VEHF), 305 to 325 (ALIG…VGLI), 349 to 369 (FEEA…VAVI), 393 to 413 (LFYL…VGTV), 449 to 469 (ATPN…SPLI), and 480 to 500 (ALPY…FLLI).

Belongs to the NhaB Na(+)/H(+) (TC 2.A.34) antiporter family.

It localises to the cell inner membrane. It carries out the reaction 2 Na(+)(in) + 3 H(+)(out) = 2 Na(+)(out) + 3 H(+)(in). Its function is as follows. Na(+)/H(+) antiporter that extrudes sodium in exchange for external protons. The polypeptide is Na(+)/H(+) antiporter NhaB (Photorhabdus laumondii subsp. laumondii (strain DSM 15139 / CIP 105565 / TT01) (Photorhabdus luminescens subsp. laumondii)).